The following is a 212-amino-acid chain: Urease accessory protein UreG 2 (212 aa).

11-18 (GPVGSGKM) serves as a coordination point for GTP.

It belongs to the SIMIBI class G3E GTPase family. UreG subfamily. In terms of assembly, homodimer. UreD, UreF and UreG form a complex that acts as a GTP-hydrolysis-dependent molecular chaperone, activating the urease apoprotein by helping to assemble the nickel containing metallocenter of UreC. The UreE protein probably delivers the nickel.

The protein resides in the cytoplasm. Its function is as follows. Facilitates the functional incorporation of the urease nickel metallocenter. This process requires GTP hydrolysis, probably effectuated by UreG. In terms of biological role, disrupting the ure2 operon has no effect on urease activity, or pathogen survival in BALB/c mice when inoculated by gavage, but confers slightly enhanced resistance to low pH killing in vitro. This chain is Urease accessory protein UreG 2, found in Brucella suis biovar 1 (strain 1330).